Here is a 728-residue protein sequence, read N- to C-terminus: Rho-related BTB domain-containing protein 2 (728 aa).

The rho-like stretch occupies residues 1–210 (MDSDMDYERP…DNAIRAALIS (210 aa)). GTP-binding positions include 21 to 28 (GDNAVGKT), 84 to 88 (DTFGD), and 140 to 143 (CQLD). BTB domains lie at 266–333 (ADVI…HHHH) and 500–567 (SDVT…TSSP). Gly residues predominate over residues 304 to 313 (ELGGPSGSGG). Positions 304–333 (ELGGPSGSGGPRPEDHRSHPEQHHHHHHHH) are disordered. A compositionally biased stretch (basic and acidic residues) spans 315 to 324 (RPEDHRSHPE). The segment at 703–728 (FWNSPSSPSSSAAGSASPSSSSSAVV) is disordered. A compositionally biased stretch (low complexity) spans 706-728 (SPSSPSSSAAGSASPSSSSSAVV).

It belongs to the small GTPase superfamily. Rho family. As to quaternary structure, interacts with HSP90AA1 and HSP90AB1. Forms a complex with CUL3 and RBX1. Interacts (via BTB 1 domain) with CUL3. Interacts with MSI2. Post-translationally, autoubiquitinated by RHOBTB2-CUL3-RBX1 ubiquitin ligase complex. As to expression, expressed in most tissues, with highest expression in brain.

Its function is as follows. Regulator of cell proliferation and apoptosis. It likely functions as a substrate-adapter that recruits key substrates, e.g. MSI2, to CUL3-based ubiquitin ligase complexes for degradation. Required for MSI2 ubiquitination and degradation. The protein is Rho-related BTB domain-containing protein 2 (Rhobtb2) of Mus musculus (Mouse).